Reading from the N-terminus, the 253-residue chain is Proteasome subunit alpha (253 aa).

The interval 229–253 (ADESQSYIDDIEDAADDSDDDDDEE) is disordered. Over residues 237–253 (DDIEDAADDSDDDDDEE) the composition is skewed to acidic residues.

The protein belongs to the peptidase T1A family. In terms of assembly, the 20S proteasome core is composed of 14 alpha and 14 beta subunits that assemble into four stacked heptameric rings, resulting in a barrel-shaped structure. The two inner rings, each composed of seven catalytic beta subunits, are sandwiched by two outer rings, each composed of seven alpha subunits. The catalytic chamber with the active sites is on the inside of the barrel. Has a gated structure, the ends of the cylinder being occluded by the N-termini of the alpha-subunits. Is capped at one or both ends by the proteasome regulatory ATPase, PAN.

It localises to the cytoplasm. Its activity is regulated as follows. The formation of the proteasomal ATPase PAN-20S proteasome complex, via the docking of the C-termini of PAN into the intersubunit pockets in the alpha-rings, triggers opening of the gate for substrate entry. Interconversion between the open-gate and close-gate conformations leads to a dynamic regulation of the 20S proteasome proteolysis activity. Its function is as follows. Component of the proteasome core, a large protease complex with broad specificity involved in protein degradation. The sequence is that of Proteasome subunit alpha from Halobacterium salinarum (strain ATCC 29341 / DSM 671 / R1).